A 1140-amino-acid chain; its full sequence is Eukaryotic translation initiation factor 3 subunit A (1140 aa).

The PCI domain occupies 319–502 (LQRMAAHVLL…HCIYFGTDLT (184 aa)). Basic and acidic residues-rich tracts occupy residues 590–624 (NNAR…EERE), 826–903 (RMAQ…RPEG), 925–965 (DRAD…KDNE), 1000–1019 (SRDD…DFRN), 1026–1053 (RGGD…EQQR), and 1061–1087 (DAPR…RDVR). Disordered regions lie at residues 590-632 (NNAR…QNEI) and 826-1140 (RMAQ…VKRR). Over residues 1091–1101 (PKEGGGGGGGN) the composition is skewed to gly residues. Residues 1108–1130 (PRDEKPTTKQRDQPQDKENKAGD) show a composition bias toward basic and acidic residues.

It belongs to the eIF-3 subunit A family. In terms of assembly, component of the eukaryotic translation initiation factor 3 (eIF-3) complex. The eIF-3 complex interacts with pix.

It is found in the cytoplasm. Its function is as follows. RNA-binding component of the eukaryotic translation initiation factor 3 (eIF-3) complex, which is involved in protein synthesis of a specialized repertoire of mRNAs and, together with other initiation factors, stimulates binding of mRNA and methionyl-tRNAi to the 40S ribosome. The eIF-3 complex specifically targets and initiates translation of a subset of mRNAs involved in cell proliferation. This is Eukaryotic translation initiation factor 3 subunit A from Drosophila willistoni (Fruit fly).